The chain runs to 448 residues: Probable glycine dehydrogenase (decarboxylating) subunit 1 (448 aa).

Belongs to the GcvP family. N-terminal subunit subfamily. As to quaternary structure, the glycine cleavage system is composed of four proteins: P, T, L and H. In this organism, the P 'protein' is a heterodimer of two subunits.

The enzyme catalyses N(6)-[(R)-lipoyl]-L-lysyl-[glycine-cleavage complex H protein] + glycine + H(+) = N(6)-[(R)-S(8)-aminomethyldihydrolipoyl]-L-lysyl-[glycine-cleavage complex H protein] + CO2. The glycine cleavage system catalyzes the degradation of glycine. The P protein binds the alpha-amino group of glycine through its pyridoxal phosphate cofactor; CO(2) is released and the remaining methylamine moiety is then transferred to the lipoamide cofactor of the H protein. In Pyrococcus furiosus (strain ATCC 43587 / DSM 3638 / JCM 8422 / Vc1), this protein is Probable glycine dehydrogenase (decarboxylating) subunit 1.